We begin with the raw amino-acid sequence, 884 residues long: MADSSESFNIATSPRTGSRRDALTSSPGRDLPPFEDESEGMFGDEVPREEEEDGEELIGDAMERDYRAISELDRYEAEGLDDEDDVEDLTASQRDAAEQAMRMRDREMGHELGRMRRGLLYDSDEEDEDRPARKRRMAERAAEGAPEEDEEMIESIENLEDMKGHTVREWVSMAATRLEIYHRFKNFLRTHVDEHGHNVFKEKISDMCKENKESLVVNYEDLAAREHVLAYFLPEAPAEMLKIFDEAAKEVVLVMYPKYDRIAREIHVRISHLPLVEELRSLRQLHLNQLIRTSGVVTCCTGVLPQLSMVKYNCNKCNFILGPFFQSQNQEVKPGSCPECQSLGPFEINMEETVYQNYQRITIQESPGKVAAGRLPRSKDAILLADLVDSCKPGDEIELTGTYHNNYDGSLNTANGFPVFATVILANHITKKDDKVAVGELTDEDVKAIVALSKDERIGERIFASIAPSIYGHEDIKRGLALALFGGEAKNPGGKHKVRGDINVLLCGDPGTAKSQFLKYVEKVASRAVFTTGQGASAVGLTAYVQRHPVTKEWTLEAGALVLADRGVCLIDEFDKMNDQDRTSIHEAMEQQSISISKAGIVTSLQARCTIIAASNPIGGRYDPSLTFSENVDLTEPIVSRFDILCVVRDTVDPVQDEMLARFVVGSHIKHHPSSKDIANGEEFALPNTFGVEPLPQEVLKKYIMYSKEKIHPKLNQMDQDKVAKMYSDLRKESMATGSIPITVRHIESMIRMAEAHARMHLRDYVVEDDVNMAIRVMLESFIDTQKFSVMRSMRKTFARYLAFRRDNNELLLFVLKQLVAEQTSYQRNRYGAQQDTIEVPEKDLVDKARQINIHNLSAFYDSDLFKMNRFTHDVKKKMIIQQF.

Residues methionine 1–threonine 16 are compositionally biased toward polar residues. Disordered regions lie at residues methionine 1–alanine 61 and leucine 120–glutamate 151. The segment covering proline 47–isoleucine 58 has biased composition (acidic residues). Residues cysteine 314 to cysteine 340 form a C4-type zinc finger. An MCM domain is found at isoleucine 458–valine 664. ADP-binding residues include serine 515 and glutamine 516. Positions serine 640–aspartate 643 match the Arginine finger motif.

The protein belongs to the MCM family. Component of the mcm2-7 complex (RLF-M). The complex forms a toroidal hexameric ring with the proposed subunit order mcm2-mcm6-mcm4-mcm7-mcm3-mcm5. Component of the replisome complex. Component of the CMG helicase complex, composed of the mcm2-7 complex, the GINS complex and cdc45. Post-translationally, may be in a phosphorylated state in the mitotic mcm complex. Phosphorylated in the interphase mcm complex. Phosphorylated by the cdc7-dbf4 and cdc7-dbf4b complexes.

Its subcellular location is the nucleus. The protein resides in the chromosome. It catalyses the reaction ATP + H2O = ADP + phosphate + H(+). Functionally, acts as a component of the MCM2-7 complex (MCM complex) which is the replicative helicase essential for 'once per cell cycle' DNA replication initiation and elongation in eukaryotic cells. Core component of CDC45-MCM-GINS (CMG) helicase, the molecular machine that unwinds template DNA during replication, and around which the replisome is built. The active ATPase sites in the MCM2-7 ring are formed through the interaction surfaces of two neighboring subunits such that a critical structure of a conserved arginine finger motif is provided in trans relative to the ATP-binding site of the Walker A box of the adjacent subunit. The six ATPase active sites, however, are likely to contribute differentially to the complex helicase activity. Required for the entry in S phase and for cell division. The polypeptide is DNA replication licensing factor mcm2 (Xenopus tropicalis (Western clawed frog)).